A 417-amino-acid polypeptide reads, in one-letter code: Serine hydroxymethyltransferase 1 (417 aa).

Residues Leu121 and 125-127 (GHL) each bind (6S)-5,6,7,8-tetrahydrofolate. Lys229 is modified (N6-(pyridoxal phosphate)lysine). 354 to 356 (SPF) serves as a coordination point for (6S)-5,6,7,8-tetrahydrofolate.

The protein belongs to the SHMT family. As to quaternary structure, homodimer. The cofactor is pyridoxal 5'-phosphate.

It is found in the cytoplasm. The catalysed reaction is (6R)-5,10-methylene-5,6,7,8-tetrahydrofolate + glycine + H2O = (6S)-5,6,7,8-tetrahydrofolate + L-serine. It functions in the pathway one-carbon metabolism; tetrahydrofolate interconversion. The protein operates within amino-acid biosynthesis; glycine biosynthesis; glycine from L-serine: step 1/1. Functionally, catalyzes the reversible interconversion of serine and glycine with tetrahydrofolate (THF) serving as the one-carbon carrier. This reaction serves as the major source of one-carbon groups required for the biosynthesis of purines, thymidylate, methionine, and other important biomolecules. Also exhibits THF-independent aldolase activity toward beta-hydroxyamino acids, producing glycine and aldehydes, via a retro-aldol mechanism. This Pseudomonas fluorescens (strain ATCC BAA-477 / NRRL B-23932 / Pf-5) protein is Serine hydroxymethyltransferase 1.